The following is a 225-amino-acid chain: NAD(P)H-quinone oxidoreductase subunit K, chloroplastic (225 aa).

Residues Cys-43, Cys-44, Cys-108, and Cys-139 each coordinate [4Fe-4S] cluster.

The protein belongs to the complex I 20 kDa subunit family. As to quaternary structure, NDH is composed of at least 16 different subunits, 5 of which are encoded in the nucleus. [4Fe-4S] cluster serves as cofactor.

The protein localises to the plastid. Its subcellular location is the chloroplast thylakoid membrane. It catalyses the reaction a plastoquinone + NADH + (n+1) H(+)(in) = a plastoquinol + NAD(+) + n H(+)(out). The catalysed reaction is a plastoquinone + NADPH + (n+1) H(+)(in) = a plastoquinol + NADP(+) + n H(+)(out). NDH shuttles electrons from NAD(P)H:plastoquinone, via FMN and iron-sulfur (Fe-S) centers, to quinones in the photosynthetic chain and possibly in a chloroplast respiratory chain. The immediate electron acceptor for the enzyme in this species is believed to be plastoquinone. Couples the redox reaction to proton translocation, and thus conserves the redox energy in a proton gradient. This Nymphaea alba (White water-lily) protein is NAD(P)H-quinone oxidoreductase subunit K, chloroplastic.